We begin with the raw amino-acid sequence, 481 residues long: RAC-alpha serine/threonine-protein kinase (481 aa).

The PH domain maps to 5-108; that stretch reads AIVKEGWLHK…WIQVIQHVAD (104 aa). Positions 120-141 are disordered; sequence VRSGDSPSDNSGAEEMEVSHSK. O-linked (GlcNAc) serine glycans are attached at residues serine 127 and serine 130. A Protein kinase domain is found at 151–409; sequence FEYLKLLGKG…AKEIMQHKFF (259 aa). ATP-binding positions include 157–165 and lysine 180; that span reads LGKGTFGKV. Aspartate 275 acts as the Proton acceptor in catalysis. The O-linked (GlcNAc) threonine glycan is linked to threonine 306. At threonine 309 the chain carries Phosphothreonine; by PDPK1. An O-linked (GlcNAc) threonine glycan is attached at threonine 313. An AGC-kinase C-terminal domain is found at 410–481; it reads AGIVWQDVYE…QFSYSASGNA (72 aa). Position 474 is a phosphoserine (serine 474). The O-linked (GlcNAc) serine; alternate glycan is linked to serine 474. Tyrosine 475 is modified (phosphotyrosine).

Belongs to the protein kinase superfamily. AGC Ser/Thr protein kinase family. RAC subfamily. Cleavage by caspase-3/CASP3. Cleaved at the caspase-3 consensus site Asp-463 during apoptosis, resulting in down-regulation of the AKT signaling pathway and decreased cell survival. In terms of processing, phosphorylation on Thr-309 and Ser-474 is required for full activity. Phosphorylation of the activation loop at Thr-309 by PDPK1/PDK1 is a prerequisite for full activation. Phosphorylation by mTORC2 at Ser-474 in response to growth factors plays a key role in AKT1 activation by facilitating subsequent phosphorylation of the activation loop by PDPK1/PDK1. Expressed in the oocyte.

The protein localises to the cytoplasm. It localises to the nucleus. The catalysed reaction is L-seryl-[protein] + ATP = O-phospho-L-seryl-[protein] + ADP + H(+). It catalyses the reaction L-threonyl-[protein] + ATP = O-phospho-L-threonyl-[protein] + ADP + H(+). Activated in response to insulin. Three specific sites, one in the kinase domain (Thr-309) and the two other ones in the C-terminal regulatory region (Ser-474 and Tyr-475), need to be phosphorylated for its full activation. AKT1 is one of several closely related serine/threonine-protein kinases known as the AKT kinase, and which regulate many processes including metabolism, proliferation, cell survival, growth and angiogenesis. This is mediated through serine and/or threonine phosphorylation of a range of downstream substrates. Over 100 substrate candidates have been reported so far, but for most of them, no isoform specificity has been reported. Signals downstream of phosphatidylinositol 3-kinase (PI(3)K) to mediate the effects of various growth factors such as platelet-derived growth factor (PDGF), epidermal growth factor (EGF), insulin and insulin-like growth factor 1 (IGF1). Plays a role as a key modulator of the AKT-mTOR signaling pathway controlling the tempo of the process of newborn neurons integration during adult neurogenesis, including correct neuron positioning, dendritic development and synapse formation. Plays a role in glucose transport by mediating insulin-induced translocation of the GLUT4 glucose transporter to the cell surface. Mediates the antiapoptotic effects of IGF1. Mediates insulin-stimulated protein synthesis, partly by playing a role in both insulin-induced phosphorylation of 4E-BP1 and in insulin-induced activation of p70 S6 kinase. Promotes glycogen synthesis by mediating the insulin-induced activation of glycogen synthase. Required for insulin-stimulated meiotic reinitiation during oocyte maturation. May be involved in the regulation of vesicular functions such as preciliary trafficking and endocytic recycling. The chain is RAC-alpha serine/threonine-protein kinase from Xenopus laevis (African clawed frog).